We begin with the raw amino-acid sequence, 758 residues long: Polyribonucleotide nucleotidyltransferase (758 aa).

2 residues coordinate Mg(2+): D488 and D494. The 60-residue stretch at 555–614 (PKLYTMKINPEKIRDVIGKGGAVIRALTEETGTQINIDEDGTITIASTDSAKADEAKRRI) folds into the KH domain. In terms of domain architecture, S1 motif spans 624–692 (GKIYEGPVVK…EKGRVKLSMR (69 aa)). The disordered stretch occupies residues 692 to 758 (RALLDRPMGD…AGEHSGQMDA (67 aa)). The span at 707–735 (PAERGERGDRGDRGDRPERGERRERREPA) shows a compositional bias: basic and acidic residues. The span at 736-745 (GADQQQQQQQ) shows a compositional bias: low complexity.

The protein belongs to the polyribonucleotide nucleotidyltransferase family. Mg(2+) is required as a cofactor.

The protein localises to the cytoplasm. The catalysed reaction is RNA(n+1) + phosphate = RNA(n) + a ribonucleoside 5'-diphosphate. Its function is as follows. Involved in mRNA degradation. Catalyzes the phosphorolysis of single-stranded polyribonucleotides processively in the 3'- to 5'-direction. The chain is Polyribonucleotide nucleotidyltransferase from Paracidovorax citrulli (strain AAC00-1) (Acidovorax citrulli).